A 369-amino-acid polypeptide reads, in one-letter code: Ribosomal RNA large subunit methyltransferase M (369 aa).

S-adenosyl-L-methionine contacts are provided by residues S198, 231–234 (APGG), D250, D270, and D287. Residue K316 is the Proton acceptor of the active site.

This sequence belongs to the class I-like SAM-binding methyltransferase superfamily. RNA methyltransferase RlmE family. RlmM subfamily. In terms of assembly, monomer.

The protein localises to the cytoplasm. It catalyses the reaction cytidine(2498) in 23S rRNA + S-adenosyl-L-methionine = 2'-O-methylcytidine(2498) in 23S rRNA + S-adenosyl-L-homocysteine + H(+). Catalyzes the 2'-O-methylation at nucleotide C2498 in 23S rRNA. This Idiomarina loihiensis (strain ATCC BAA-735 / DSM 15497 / L2-TR) protein is Ribosomal RNA large subunit methyltransferase M.